Here is a 669-residue protein sequence, read N- to C-terminus: DNA mismatch repair protein MutL (669 aa).

A disordered region spans residues 357 to 379 (EQRQNTENNQEKTFSSEESNSKS). A compositionally biased stretch (polar residues) spans 361 to 379 (NTENNQEKTFSSEESNSKS).

Belongs to the DNA mismatch repair MutL/HexB family.

Its function is as follows. This protein is involved in the repair of mismatches in DNA. It is required for dam-dependent methyl-directed DNA mismatch repair. May act as a 'molecular matchmaker', a protein that promotes the formation of a stable complex between two or more DNA-binding proteins in an ATP-dependent manner without itself being part of a final effector complex. The protein is DNA mismatch repair protein MutL of Staphylococcus aureus (strain Mu3 / ATCC 700698).